The following is a 237-amino-acid chain: Probable S-methyl-5'-thioinosine phosphorylase (237 aa).

Residues T12 and 54–55 (RH) contribute to the phosphate site. M187 is a substrate binding site. A phosphate-binding site is contributed by T188. 211-213 (NWA) provides a ligand contact to substrate.

Belongs to the PNP/MTAP phosphorylase family. MTAP subfamily. In terms of assembly, homotrimer.

The catalysed reaction is S-methyl-5'-thioinosine + phosphate = 5-(methylsulfanyl)-alpha-D-ribose 1-phosphate + hypoxanthine. It functions in the pathway purine metabolism; purine nucleoside salvage. Its function is as follows. Catalyzes the reversible phosphorylation of S-methyl-5'-thioinosine (MTI) to hypoxanthine and 5-methylthioribose-1-phosphate. Involved in the breakdown of S-methyl-5'-thioadenosine (MTA), a major by-product of polyamine biosynthesis. Catabolism of (MTA) occurs via deamination to MTI and phosphorolysis to hypoxanthine. This Xylella fastidiosa (strain 9a5c) protein is Probable S-methyl-5'-thioinosine phosphorylase.